A 245-amino-acid chain; its full sequence is Folate receptor gamma (245 aa).

A signal peptide spans 1-22 (MDMAWQMMQLLLLALVTAAGSA). Intrachain disulfides connect C37–C65, C57–C105, C66–C109, C89–C175, C96–C146, C135–C209, C139–C189, and C152–C169. Folate contacts are provided by D103 and Y107. N121 carries an N-linked (GlcNAc...) asparagine glycan. Folate-binding positions include 124–128 (WRKER), 157–162 (HKGWNW), and S196. Residue N161 is glycosylated (N-linked (GlcNAc...) asparagine). N201 carries N-linked (GlcNAc...) asparagine glycosylation.

The protein belongs to the folate receptor family. As to expression, spleen, thymus, bone marrow, ovarian carcinoma, and uterine carcinoma.

The protein resides in the secreted. In terms of biological role, binds to folate and reduced folic acid derivatives and mediates delivery of 5-methyltetrahydrofolate to the interior of cells. Isoform Short does not bind folate. This Homo sapiens (Human) protein is Folate receptor gamma (FOLR3).